Reading from the N-terminus, the 305-residue chain is Fumarylacetoacetate hydrolase domain-containing protein 2 homolog (305 aa).

3 residues coordinate a divalent metal cation: Glu-141, Glu-143, and Asp-172.

It belongs to the FAH family. Ca(2+) serves as cofactor. Requires Mg(2+) as cofactor.

In terms of biological role, may have hydrolase activity. The protein is Fumarylacetoacetate hydrolase domain-containing protein 2 homolog (fahd2) of Dictyostelium discoideum (Social amoeba).